The following is a 358-amino-acid chain: UDP-N-acetylglucosamine--N-acetylmuramyl-(pentapeptide) pyrophosphoryl-undecaprenol N-acetylglucosamine transferase (358 aa).

UDP-N-acetyl-alpha-D-glucosamine contacts are provided by residues 11–13, Asn-124, Arg-164, Ser-195, and Gln-291; that span reads TGG.

It belongs to the glycosyltransferase 28 family. MurG subfamily.

The protein localises to the cell inner membrane. The enzyme catalyses di-trans,octa-cis-undecaprenyl diphospho-N-acetyl-alpha-D-muramoyl-L-alanyl-D-glutamyl-meso-2,6-diaminopimeloyl-D-alanyl-D-alanine + UDP-N-acetyl-alpha-D-glucosamine = di-trans,octa-cis-undecaprenyl diphospho-[N-acetyl-alpha-D-glucosaminyl-(1-&gt;4)]-N-acetyl-alpha-D-muramoyl-L-alanyl-D-glutamyl-meso-2,6-diaminopimeloyl-D-alanyl-D-alanine + UDP + H(+). It functions in the pathway cell wall biogenesis; peptidoglycan biosynthesis. Its function is as follows. Cell wall formation. Catalyzes the transfer of a GlcNAc subunit on undecaprenyl-pyrophosphoryl-MurNAc-pentapeptide (lipid intermediate I) to form undecaprenyl-pyrophosphoryl-MurNAc-(pentapeptide)GlcNAc (lipid intermediate II). The protein is UDP-N-acetylglucosamine--N-acetylmuramyl-(pentapeptide) pyrophosphoryl-undecaprenol N-acetylglucosamine transferase of Leptospira interrogans serogroup Icterohaemorrhagiae serovar copenhageni (strain Fiocruz L1-130).